Reading from the N-terminus, the 266-residue chain is MRQKTSSNKKKQKNTNNISLRRKLGLMYKKAILGLKIVLMIFVCLFVFTKYFTSIKTYLITNIYQITTKLGFRLENVIIEGQQNVDELTILKVLNANKRSSIFALKLDEISNNLKKSKWIKEVYVSRRLPNTVYIKLFEREPIAIWQINNQLFLVDEEGYKISKDIQPFSHLLHVVGEGANIYASQLVLELKKYPALLNKTLVAIRVGDRRWDLNLKGNISIKLPEKEFEAALKYIDALNKNNRLFNQNYKALDLRDRNKYYIQKY.

The Cytoplasmic portion of the chain corresponds to 1–31 (MRQKTSSNKKKQKNTNNISLRRKLGLMYKKA). The chain crosses the membrane as a helical span at residues 32 to 52 (ILGLKIVLMIFVCLFVFTKYF). Over 53–266 (TSIKTYLITN…DRNKYYIQKY (214 aa)) the chain is Periplasmic. Residues 72 to 140 (FRLENVIIEG…NTVYIKLFER (69 aa)) enclose the POTRA domain.

The protein belongs to the FtsQ/DivIB family. FtsQ subfamily.

Its subcellular location is the cell inner membrane. Its function is as follows. Essential cell division protein. In Rickettsia typhi (strain ATCC VR-144 / Wilmington), this protein is Cell division protein FtsQ.